A 214-amino-acid polypeptide reads, in one-letter code: 3-demethoxyubiquinol 3-hydroxylase (214 aa).

The Fe cation site is built by E63, E93, H96, E145, E177, and H180.

This sequence belongs to the COQ7 family. Fe cation serves as cofactor.

It is found in the cell membrane. The enzyme catalyses a 5-methoxy-2-methyl-3-(all-trans-polyprenyl)benzene-1,4-diol + AH2 + O2 = a 3-demethylubiquinol + A + H2O. Its pathway is cofactor biosynthesis; ubiquinone biosynthesis. Catalyzes the hydroxylation of 2-nonaprenyl-3-methyl-6-methoxy-1,4-benzoquinol during ubiquinone biosynthesis. The protein is 3-demethoxyubiquinol 3-hydroxylase of Psychrobacter cryohalolentis (strain ATCC BAA-1226 / DSM 17306 / VKM B-2378 / K5).